Consider the following 247-residue polypeptide: UDP-2,3-diacylglucosamine hydrolase (247 aa).

The Mn(2+) site is built by D8, H10, D41, N79, and H114. Residue 79–80 coordinates substrate; sequence NR. 5 residues coordinate substrate: D122, S160, D171, Q174, and H202. Mn(2+)-binding residues include H202 and H204.

Belongs to the LpxH family. Requires Mn(2+) as cofactor.

Its subcellular location is the cell inner membrane. It catalyses the reaction UDP-2-N,3-O-bis[(3R)-3-hydroxytetradecanoyl]-alpha-D-glucosamine + H2O = 2-N,3-O-bis[(3R)-3-hydroxytetradecanoyl]-alpha-D-glucosaminyl 1-phosphate + UMP + 2 H(+). It participates in glycolipid biosynthesis; lipid IV(A) biosynthesis; lipid IV(A) from (3R)-3-hydroxytetradecanoyl-[acyl-carrier-protein] and UDP-N-acetyl-alpha-D-glucosamine: step 4/6. Its function is as follows. Hydrolyzes the pyrophosphate bond of UDP-2,3-diacylglucosamine to yield 2,3-diacylglucosamine 1-phosphate (lipid X) and UMP by catalyzing the attack of water at the alpha-P atom. Involved in the biosynthesis of lipid A, a phosphorylated glycolipid that anchors the lipopolysaccharide to the outer membrane of the cell. The chain is UDP-2,3-diacylglucosamine hydrolase from Xanthomonas campestris pv. campestris (strain 8004).